The following is a 146-amino-acid chain: Large ribosomal subunit protein uL15y (146 aa).

2 stretches are compositionally biased toward basic residues: residues 1 to 14 and 21 to 30; these read MATA…KRGH and RIGKHRKHPG. A disordered region spans residues 1–38; the sequence is MATALKKNRKKRGHVSAGHGRIGKHRKHPGGRGNAGGM.

Belongs to the universal ribosomal protein uL15 family.

The polypeptide is Large ribosomal subunit protein uL15y (RPL27AB) (Arabidopsis thaliana (Mouse-ear cress)).